The chain runs to 522 residues: Serine/threonine-protein kinase BSK1-2 (522 aa).

The interval 1-54 (MGCCGSSLRVGSHAPEKPPRRARPPPPPPQPHHPRRPSFTLNAHQAAASSSAAS) is disordered. A lipid anchor (N-myristoyl glycine) is attached at glycine 2. The Protein kinase domain maps to 79–338 (ANIVSESGEK…KLVSILQPLQ (260 aa)). Residues 85–93 (SGEKAPNLV) and lysine 111 contribute to the ATP site. The Proton acceptor role is filled by aspartate 205.

The protein belongs to the protein kinase superfamily. Ser/Thr protein kinase family.

It is found in the cell membrane. It carries out the reaction L-seryl-[protein] + ATP = O-phospho-L-seryl-[protein] + ADP + H(+). The catalysed reaction is L-threonyl-[protein] + ATP = O-phospho-L-threonyl-[protein] + ADP + H(+). Probable serine/threonine kinase that functions as a positive regulator of plant immunity. May be involved in the regulation of pattern-triggered immunity (PTI). Does not seem to be involved in responses to brassinosteroid (BR) signaling. In Oryza sativa subsp. japonica (Rice), this protein is Serine/threonine-protein kinase BSK1-2.